A 351-amino-acid polypeptide reads, in one-letter code: MRPPAPAVLGLLLLLLPTGEATKKPTPCKRCRELVDKFNQGMVDTAKKNFGGGNTAWEEKTLSKYEFSEVRLLEIVEGLCEASDFECNQLLEEQEELLEAWWLRLKKKHPDLFEWFCVQTLKACCSPGTYGPDCLACQGGSERPCSGNGHCVGDGTREGDGSCQCHLGYQGPLCSDCMDGYFRSPTSETHSICSACDEACKTCVGPTNRDCGQCEVGWVRQDDACVDVDECAAEPPPCEDTQYCENVNGSFVCEECDPTCMGCTGKGPTQCRECIAGYSKESGQCEDIDECSLAEKPCLRDNENCYNTPGSFVCVCPDGFEEAEDTCVQTRPAGAEATEASPTQPPSREDL.

Residues 1–21 (MRPPAPAVLGLLLLLLPTGEA) form the signal peptide. Residues 28–31 (CKRC) carry the CXXC motif. Intrachain disulfides connect Cys-28–Cys-31, Cys-137–Cys-151, Cys-145–Cys-163, and Cys-165–Cys-174. In terms of domain architecture, EGF-like 1 spans 133–175 (DCLACQGGSERPCSGNGHCVGDGTREGDGSCQCHLGYQGPLCS). An FU 1 repeat occupies 190 to 237 (HSICSACDEACKTCVGPTNRDCGQCEVGWVRQDDACVDVDECAAEPPP). N-linked (GlcNAc...) asparagine glycosylation is present at Asn-248. One copy of the FU 2 repeat lies at 250–297 (SFVCEECDPTCMGCTGKGPTQCRECIAGYSKESGQCEDIDECSLAEKP). The CXXC motif lies at 260-263 (CMGC). 4 cysteine pairs are disulfide-bonded: Cys-260–Cys-263, Cys-291–Cys-305, Cys-298–Cys-314, and Cys-316–Cys-327. Residues 287 to 328 (DIDECSLAEKPCLRDNENCYNTPGSFVCVCPDGFEEAEDTCV) form the EGF-like 2; calcium-binding domain. A disordered region spans residues 329 to 351 (QTRPAGAEATEASPTQPPSREDL).

Belongs to the CRELD family. Interacts with CHRNA4. Component of a complex containing at least CRELD2, MANF, MATN3 and PDIA4.

It localises to the endoplasmic reticulum. It catalyses the reaction Catalyzes the rearrangement of -S-S- bonds in proteins.. Functionally, protein disulfide isomerase. Might play a role in the unfolded protein response. May regulate transport of alpha4-beta2 neuronal acetylcholine receptor. The protein is Protein disulfide isomerase CRELD2 (CRELD2) of Bos taurus (Bovine).